Here is a 206-residue protein sequence, read N- to C-terminus: A-type ATP synthase subunit D (206 aa).

It belongs to the V-ATPase D subunit family. As to quaternary structure, has multiple subunits with at least A(3), B(3), C, D, E, F, H, I and proteolipid K(x).

It is found in the cell membrane. Its function is as follows. Component of the A-type ATP synthase that produces ATP from ADP in the presence of a proton gradient across the membrane. This chain is A-type ATP synthase subunit D, found in Methanococcoides burtonii (strain DSM 6242 / NBRC 107633 / OCM 468 / ACE-M).